Reading from the N-terminus, the 88-residue chain is Molybdopterin synthase sulfur carrier subunit (88 aa).

Gly88 carries the 1-thioglycine; alternate modification. Position 88 is a glycyl adenylate; alternate (Gly88).

It belongs to the MoaD family. MOCS2A subfamily. Heterotetramer; composed of 2 small (MOCS2A) and 2 large (MOCS2B) subunits. Post-translationally, C-terminal thiocarboxylation occurs in 2 steps, it is first acyl-adenylated (-COAMP) via the hesA/moeB/thiF part of MOCS3, then thiocarboxylated (-COSH) via the rhodanese domain of MOCS3.

The protein localises to the cytoplasm. It is found in the cytosol. Its pathway is cofactor biosynthesis; molybdopterin biosynthesis. Acts as a sulfur carrier required for molybdopterin biosynthesis. Component of the molybdopterin synthase complex that catalyzes the conversion of precursor Z into molybdopterin by mediating the incorporation of 2 sulfur atoms into precursor Z to generate a dithiolene group. In the complex, serves as sulfur donor by being thiocarboxylated (-COSH) at its C-terminus by MOCS3. After interaction with MOCS2B, the sulfur is then transferred to precursor Z to form molybdopterin. The chain is Molybdopterin synthase sulfur carrier subunit from Mus musculus (Mouse).